Reading from the N-terminus, the 329-residue chain is MHKFTKALAAIGLAAVMSQSAMAENLKLGFLVKQPEEPWFQTEWKFADKAGKDLGFEVIKIAVPDGEKTLNAIDSLAASGAKGFVICTPDPKLGSAIVAKARGYDMKVIAVDDQFVNAKGKPMDTVPLVMMAATKIGERQGQELYKEMQKRGWDVKESAVMAITANELDTARRRTTGSMDALKAAGFPEKQIYQVPTKSNDIPGAFDAANSMLVQHPEVKHWLIVGMNDSTVLGGVRATEGQGFKAADIIGIGINGVDAVSELSKAQATGFYGSLLPSPDVHGYKSSEMLYNWVAKDVEPPKFTEVTDVVLITRDNFKEELEKKGLGGK.

Residues 1 to 23 (MHKFTKALAAIGLAAVMSQSAMA) form the signal peptide.

The protein belongs to the bacterial solute-binding protein 2 family.

It localises to the periplasm. Functionally, involved in the high-affinity L-arabinose membrane transport system. Binds with high affinity to arabinose, but can also bind D-galactose (approximately 2-fold reduction) and D-fucose (approximately 40-fold reduction). This chain is L-arabinose-binding periplasmic protein (araF), found in Escherichia coli (strain K12).